A 192-amino-acid chain; its full sequence is MATPMHRLIARRQAFDTELQPVKTFWILIQPSIVISEANKQHVRCQKCLEFGHWTYECTGKRKYLHRPSRTAELKKALKEKENRLLLQQSIGETNVERKAKKKRSKSVTSSSSSSSDSSASDSSSESEETSTSSSSEDSDTDESSSSSSSSASSTTSSSSSDSDSDSSSSSSSSTSTDSSSDDEPPKKKKKK.

A CCHC-type zinc finger spans residues 43-60; the sequence is VRCQKCLEFGHWTYECTG. The tract at residues 89 to 192 is disordered; the sequence is QSIGETNVER…DEPPKKKKKK (104 aa). 2 stretches are compositionally biased toward low complexity: residues 109 to 136 and 144 to 179; these read TSSS…SSSS and SSSS…STDS.

The sequence is that of Zinc finger CCHC domain-containing protein 10 (ZCCHC10) from Homo sapiens (Human).